A 247-amino-acid polypeptide reads, in one-letter code: MFSPQQPMRNYPQPGPPRPMPNQRMMGRRPPNMRGPSFGAQQQGFQQAGQFLPQANAGARNGAGAGGGLKGMLSRFLPGGGGAGSAGVPGIPGAGAAASGGAGLQGIQNIANPASLSSMLGNVQKVLGMAQQVTPMIQQYGPLVRNLPAMMKLYSQLSKSDDTETEANEESEKQSVSEESSEKEKETETKTSDGNKKSKPKSSSLPKKSKTTDNKEQELKTSAPKKKEAASPAPKRTSGSSKPRLYI.

Composition is skewed to low complexity over residues 1-12 (MFSPQQPMRNYP) and 21-43 (PNQRMMGRRPPNMRGPSFGAQQQ). 2 disordered regions span residues 1-43 (MFSP…AQQQ) and 157-247 (LSKS…RLYI). Basic and acidic residues-rich tracts occupy residues 170-196 (ESEKQSVSEESSEKEKETETKTSDGNK) and 210-229 (KTTDNKEQELKTSAPKKKEA).

This is an uncharacterized protein from Bacillus subtilis (strain 168).